We begin with the raw amino-acid sequence, 340 residues long: Protein-lysine N-methyltransferase EEF2KMT (340 aa).

Met-1 is subject to N-acetylmethionine. S-adenosyl-L-methionine is bound by residues Trp-139, 165–167 (GSG), Trp-238, and Ala-257.

It belongs to the class I-like SAM-binding methyltransferase superfamily. EEF2KMT family. In terms of assembly, interacts with FAM86B2 and FAM86C1P.

Its subcellular location is the cytoplasm. It catalyses the reaction L-lysyl-[protein] + 3 S-adenosyl-L-methionine = N(6),N(6),N(6)-trimethyl-L-lysyl-[protein] + 3 S-adenosyl-L-homocysteine + 3 H(+). In terms of biological role, catalyzes the trimethylation of eukaryotic elongation factor 2 (EEF2) on 'Lys-525'. In Bos taurus (Bovine), this protein is Protein-lysine N-methyltransferase EEF2KMT (EEF2KMT).